The sequence spans 331 residues: Ribose-phosphate pyrophosphokinase (331 aa).

Position 55 to 57 (55 to 57) interacts with ATP; it reads DGE. Mg(2+)-binding residues include histidine 148 and aspartate 187. Residue lysine 211 is part of the active site. Residues arginine 213, aspartate 237, and 241–245 contribute to the D-ribose 5-phosphate site; that span reads DTGGT.

Belongs to the ribose-phosphate pyrophosphokinase family. Class I subfamily. Homohexamer. Requires Mg(2+) as cofactor.

It is found in the cytoplasm. The enzyme catalyses D-ribose 5-phosphate + ATP = 5-phospho-alpha-D-ribose 1-diphosphate + AMP + H(+). The protein operates within metabolic intermediate biosynthesis; 5-phospho-alpha-D-ribose 1-diphosphate biosynthesis; 5-phospho-alpha-D-ribose 1-diphosphate from D-ribose 5-phosphate (route I): step 1/1. Its function is as follows. Involved in the biosynthesis of the central metabolite phospho-alpha-D-ribosyl-1-pyrophosphate (PRPP) via the transfer of pyrophosphoryl group from ATP to 1-hydroxyl of ribose-5-phosphate (Rib-5-P). The sequence is that of Ribose-phosphate pyrophosphokinase from Prochlorococcus marinus subsp. pastoris (strain CCMP1986 / NIES-2087 / MED4).